We begin with the raw amino-acid sequence, 325 residues long: Beta-ketoacyl-[acyl-carrier-protein] synthase III (325 aa).

Residues Cys-119 and His-252 contribute to the active site. The ACP-binding stretch occupies residues 253–257 (QANIR). Asn-282 is a catalytic residue.

It belongs to the thiolase-like superfamily. FabH family. As to quaternary structure, homodimer.

It is found in the cytoplasm. It catalyses the reaction malonyl-[ACP] + acetyl-CoA + H(+) = 3-oxobutanoyl-[ACP] + CO2 + CoA. Its pathway is lipid metabolism; fatty acid biosynthesis. Its function is as follows. Catalyzes the condensation reaction of fatty acid synthesis by the addition to an acyl acceptor of two carbons from malonyl-ACP. Catalyzes the first condensation reaction which initiates fatty acid synthesis and may therefore play a role in governing the total rate of fatty acid production. Possesses both acetoacetyl-ACP synthase and acetyl transacylase activities. Its substrate specificity determines the biosynthesis of branched-chain and/or straight-chain of fatty acids. The polypeptide is Beta-ketoacyl-[acyl-carrier-protein] synthase III (Acidovorax ebreus (strain TPSY) (Diaphorobacter sp. (strain TPSY))).